A 785-amino-acid chain; its full sequence is Cadherin-7 (785 aa).

An N-terminal signal peptide occupies residues 1 to 27 (MKLGKVELCHFLQLIALFLCFSGMSQA). Residues 28–47 (ELPRSRSKPYFQSGRSRTKR) constitute a propeptide that is removed on maturation. The Extracellular segment spans residues 28 to 607 (ELPRSRSKPY…AYVLPAGLST (580 aa)). 5 Cadherin domains span residues 49-153 (WVWN…EPKF), 154-262 (LDGP…PPRF), 263-377 (PRRS…PPVF), 378-482 (SSPL…APEF), and 482-599 (FAMD…AEAY). Asn-449 and Asn-530 each carry an N-linked (GlcNAc...) asparagine glycan. Residues 608–628 (GALIAILACVLTLLVLILLIV) form a helical membrane-spanning segment. The Cytoplasmic portion of the chain corresponds to 629–785 (TMRRRKKEPL…YGNGQESLYS (157 aa)).

It localises to the cell membrane. Its function is as follows. Cadherins are calcium-dependent cell adhesion proteins. They preferentially interact with themselves in a homophilic manner in connecting cells; cadherins may thus contribute to the sorting of heterogeneous cell types. This chain is Cadherin-7 (Cdh7), found in Mus musculus (Mouse).